The primary structure comprises 604 residues: Transcriptional repressor rco-1 (604 aa).

Disordered regions lie at residues 87–110 (RGGA…PAIG) and 124–264 (GGQA…DRLP). Residues 144-163 (MPAPPGLQGPPPPPPPPSQQ) show a composition bias toward pro residues. Composition is skewed to low complexity over residues 164-177 (PPFQ…QGPG) and 190-209 (PGPA…PATP). The segment covering 210–229 (QINTPIPYNGGPAQSPQVPT) has biased composition (polar residues). 7 WD repeats span residues 295-324 (QHES…QIYD), 342-372 (TGDL…RVWD), 384-414 (GHEQ…RLWD), 425-455 (SIED…RVWD), 469-499 (GHKD…KMWE), 523-553 (GHRD…QFWD), and 565-600 (GHKN…RIWS).

In terms of biological role, represses transcription by RNA polymerase II. May be involved at several stages of conidiation and other growth and development processes. Appears to regulate genes that are expressed in asexual and sexual spore pathways. The chain is Transcriptional repressor rco-1 (rco-1) from Neurospora crassa (strain ATCC 24698 / 74-OR23-1A / CBS 708.71 / DSM 1257 / FGSC 987).